We begin with the raw amino-acid sequence, 227 residues long: MAPYQIRQYQERDYKLVVGLFSRGMMEHIPAAFRYTLLLPQTLLFLFVMPLTIVLVFGSWLLAVICIFFLLLLLRLLAGQPFKDYVAQCLQTDMADITRSYLNAHGSFWVAESGGLVVGTVGGLPVKDPPLGRKQMQLFHLSVSSQHRGQGIAKALVRTVFQFARDQGYSDVVLETSVIQQSAITLYEAMGFQRTGKYSEISIIKWLITFSIIHFTYSFPSTQKHEL.

Helical transmembrane passes span 29–49, 53–73, and 201–221; these read IPAA…LFVM, IVLV…LLLL, and ISII…SFPS. The 145-residue stretch at 69–213 folds into the N-acetyltransferase domain; the sequence is FLLLLLRLLA…IKWLITFSII (145 aa).

It belongs to the camello family.

The protein localises to the membrane. Functionally, may play a role in regulation of gastrulation. The polypeptide is Probable N-acetyltransferase family 8 member 5 (Mus musculus (Mouse)).